The following is a 194-amino-acid chain: Imidazoleglycerol-phosphate dehydratase (194 aa).

This sequence belongs to the imidazoleglycerol-phosphate dehydratase family.

The protein localises to the cytoplasm. The enzyme catalyses D-erythro-1-(imidazol-4-yl)glycerol 3-phosphate = 3-(imidazol-4-yl)-2-oxopropyl phosphate + H2O. It participates in amino-acid biosynthesis; L-histidine biosynthesis; L-histidine from 5-phospho-alpha-D-ribose 1-diphosphate: step 6/9. The polypeptide is Imidazoleglycerol-phosphate dehydratase (Listeria monocytogenes serovar 1/2a (strain ATCC BAA-679 / EGD-e)).